We begin with the raw amino-acid sequence, 542 residues long: TNF receptor-associated factor 6 (542 aa).

Residues 32-54 (ESFLSPTENPSTISVSSSMPPDQ) are disordered. A compositionally biased stretch (polar residues) spans 35 to 52 (LSPTENPSTISVSSSMPP). The RING-type; degenerate zinc-finger motif lies at 71-110 (CPICLMGLRSAVQTPCGHRFCDSCIRKSIRDTGQKCPVDN). 2 consecutive TRAF-type zinc fingers follow at residues 151–203 (KHLS…AVKQ) and 204–260 (NHEQ…NELA). Residues 311–373 (QCKQELLNLR…STRELEAQQY (63 aa)) are a coiled coil. Positions 374–520 (QGIYVWRVEN…EDVLLVRCEV (147 aa)) constitute an MATH domain. Substrate is bound at residue 489–496 (PKGFGYVT).

Belongs to the TNF receptor-associated factor family. A subfamily. As to quaternary structure, homotrimer. Homooligomer.

The protein resides in the cytoplasm. The protein localises to the cell cortex. It is found in the nucleus. It localises to the lipid droplet. The catalysed reaction is S-ubiquitinyl-[E2 ubiquitin-conjugating enzyme]-L-cysteine + [acceptor protein]-L-lysine = [E2 ubiquitin-conjugating enzyme]-L-cysteine + N(6)-ubiquitinyl-[acceptor protein]-L-lysine.. It participates in protein modification; protein ubiquitination. Its function is as follows. E3 ubiquitin ligase that, together with UBE2N and UBE2V1, mediates the synthesis of 'Lys-63'-linked-polyubiquitin chains conjugated to proteins, such as IKBKG, IRAK1, AKT1 and AKT2. Also mediates ubiquitination of free/unanchored polyubiquitin chain that leads to MAP3K7 activation. The chain is TNF receptor-associated factor 6 (traf6) from Danio rerio (Zebrafish).